A 177-amino-acid chain; its full sequence is NADH-quinone oxidoreductase subunit B (177 aa).

Residues C56, C57, C121, and C151 each contribute to the [4Fe-4S] cluster site.

This sequence belongs to the complex I 20 kDa subunit family. As to quaternary structure, NDH-1 is composed of 14 different subunits. Subunits NuoB, C, D, E, F, and G constitute the peripheral sector of the complex. [4Fe-4S] cluster serves as cofactor.

The protein localises to the cell inner membrane. The catalysed reaction is a quinone + NADH + 5 H(+)(in) = a quinol + NAD(+) + 4 H(+)(out). Functionally, NDH-1 shuttles electrons from NADH, via FMN and iron-sulfur (Fe-S) centers, to quinones in the respiratory chain. Couples the redox reaction to proton translocation (for every two electrons transferred, four hydrogen ions are translocated across the cytoplasmic membrane), and thus conserves the redox energy in a proton gradient. The chain is NADH-quinone oxidoreductase subunit B from Roseobacter denitrificans (strain ATCC 33942 / OCh 114) (Erythrobacter sp. (strain OCh 114)).